A 426-amino-acid polypeptide reads, in one-letter code: NADH-quinone oxidoreductase subunit D 1 (426 aa).

Residues 1–51 (MATEFTVPDSAARIATAQQAGGGTPVRSGPPDEGGEFSGDRMSLSMGPSHP) are disordered.

Belongs to the complex I 49 kDa subunit family. In terms of assembly, NDH-1 is composed of 14 different subunits. Subunits NuoB, C, D, E, F, and G constitute the peripheral sector of the complex.

The protein resides in the cell inner membrane. It catalyses the reaction a quinone + NADH + 5 H(+)(in) = a quinol + NAD(+) + 4 H(+)(out). In terms of biological role, NDH-1 shuttles electrons from NADH, via FMN and iron-sulfur (Fe-S) centers, to quinones in the respiratory chain. The immediate electron acceptor for the enzyme in this species is believed to be ubiquinone. Couples the redox reaction to proton translocation (for every two electrons transferred, four hydrogen ions are translocated across the cytoplasmic membrane), and thus conserves the redox energy in a proton gradient. The polypeptide is NADH-quinone oxidoreductase subunit D 1 (Opitutus terrae (strain DSM 11246 / JCM 15787 / PB90-1)).